Reading from the N-terminus, the 873-residue chain is MSFIMKPHRHFQRTLILLATFCMVSIIISAYYLYSGYKQESEVSGRASEVDCGDLQHIPSRLMEVRRTMISDASRTDPTVLVFVESQYSSLGQDIIMMLESIRFHYHTEIAPGKGDLPALTDNVKGKYVLIIYENILKYINMDSWNRSLLDKYCIEYGVGIIGFHKTSEKNLQSFQFRGFPFSISGNLAVKDCCINPHSPLLRVTKSSKLDRGSLPGTDWTVFQINHSTYQPVIFAKVKTPENLSPPISKHAFYATIIHDLGLHDGIQRVLFGNNLNFWLHKLIFIDAISFLSGKRLTLSLDRYILVDIDDIFVGKEGTRMNTNDVKALLDTQNLLRTQITNFTFNLGFSGKFYHTGTEEEDEGDDCLLGSVDEFWWFPHMWSHMQPHLFHNESSLIEQMILNKKFALEHGIPTDMGYAVSPHHSGVYPVHVQLYEAWKKVWNIKITSTEEYPHLKPARYRRGFIHKNIMVLPRQTCGLFTHTIFYKEYPGGPRELDKSIHGGELFFTVVLNPISIFMTHLSNYGNDRLGLYTFVNLANFVQTWTNLRLQTLPPAQLAHKYFELFPDQKDPLWQNPCDDKRHRDIWSKEKTCDRLPKFLVIGPQKTGTTALCLFLIMHPSILSNSPSPKSFEEVQFFNRNNYHRGIDWYMDFFPVPSNVTTDFLFEKSANYFHSEDAPKRAASLVPKAKIITILIDPSDRAYSWYQHQRSHEDPAALKFSFYEVISAGPNAPWELRTLQKRCLVPGWYANHIERWLVYFPPFQLLIIDGQHLRTTPATVMDEVQKFLGVSPHYNYSEALTFDSHKGFWCQLLEEGKTKCLGKSKGRKYPPMDSDSRAFLSSYYRDHNVELSKLLHRLGQPLPSWLRQELQKVR.

Residues 1-13 (MSFIMKPHRHFQR) are Cytoplasmic-facing. Residues 14-34 (TLILLATFCMVSIIISAYYLY) form a helical; Signal-anchor for type II membrane protein membrane-spanning segment. Residues 35 to 873 (SGYKQESEVS…WLRQELQKVR (839 aa)) lie on the Lumenal side of the membrane. A heparan sulfate N-deacetylase 3 region spans residues 36 to 589 (GYKQESEVSG…KRHRDIWSKE (554 aa)). Asn146, Asn226, Asn342, and Asn392 each carry an N-linked (GlcNAc...) asparagine glycan. The segment at 590 to 873 (KTCDRLPKFL…WLRQELQKVR (284 aa)) is heparan sulfate N-sulfotransferase 3. Catalysis depends on Lys605, which acts as the For sulfotransferase activity. A 3'-phosphoadenylyl sulfate-binding site is contributed by 605 to 609 (KTGTT). A glycan (N-linked (GlcNAc...) asparagine) is linked at Asn658. Residue Ser703 coordinates 3'-phosphoadenylyl sulfate. Residue Asn794 is glycosylated (N-linked (GlcNAc...) asparagine). Cys809 and Cys819 are joined by a disulfide. Position 824-828 (824-828 (KGRKY)) interacts with 3'-phosphoadenylyl sulfate.

The protein belongs to the sulfotransferase 1 family. NDST subfamily. Monomer. Strongly expressed strongly in brain. Expressed at high level at embryonic day 11 compared to other stages of development. Weakly expressed in adult heart, kidney, muscle, endothelial cells and testis but not in other tissues.

It is found in the golgi apparatus membrane. It carries out the reaction alpha-D-glucosaminyl-[heparan sulfate](n) + 3'-phosphoadenylyl sulfate = N-sulfo-alpha-D-glucosaminyl-[heparan sulfate](n) + adenosine 3',5'-bisphosphate + 2 H(+). The protein operates within glycan metabolism; heparan sulfate biosynthesis. Its pathway is glycan metabolism; heparin biosynthesis. In terms of biological role, essential bifunctional enzyme that catalyzes both the N-deacetylation and the N-sulfation of glucosamine (GlcNAc) of the glycosaminoglycan in heparan sulfate. Modifies the GlcNAc-GlcA disaccharide repeating sugar backbone to make N-sulfated heparosan, a prerequisite substrate for later modifications in heparin biosynthesis. Has high deacetylase activity but low sulfotransferase activity. This Mus musculus (Mouse) protein is Bifunctional heparan sulfate N-deacetylase/N-sulfotransferase 3 (Ndst3).